A 242-amino-acid polypeptide reads, in one-letter code: Ras-like protein family member 11A (242 aa).

The segment at 17–241 (ESSSDYLLPK…SPKVKAPSAL (225 aa)) is small GTPase-like. GTP is bound by residues 34–41 (GAGRVGKS), 81–85 (DTPGG), and 147–150 (NKGD).

It belongs to the small GTPase superfamily. Ras family. In terms of assembly, interacts with UBF/UBTF. In terms of tissue distribution, widely expressed. Down-regulated in prostate tumors compared to normal prostate tissue. High levels found in colon tumor and normal colon tissue followed by small intestine, liver, jejunum, ileum, bladder and aorta. Lowest levels observed in endothelial cells.

The protein localises to the nucleus. The protein resides in the nucleolus. The catalysed reaction is GTP + H2O = GDP + phosphate + H(+). Regulator of rDNA transcription. Acts in cooperation UBF/UBTF and positively regulates RNA polymerase I transcription. This Homo sapiens (Human) protein is Ras-like protein family member 11A.